The following is a 110-amino-acid chain: Integration host factor subunit alpha (110 aa).

It belongs to the bacterial histone-like protein family. Heterodimer of an alpha and a beta chain.

Its function is as follows. This protein is one of the two subunits of integration host factor, a specific DNA-binding protein that functions in genetic recombination as well as in transcriptional and translational control. This is Integration host factor subunit alpha from Delftia acidovorans (strain DSM 14801 / SPH-1).